The primary structure comprises 346 residues: GPALPP motifs-containing protein 1 (346 aa).

2 disordered regions span residues 1-283 (MARD…ESLM) and 289-308 (KLKS…IPFD). An N-acetylalanine modification is found at A2. The short motif at 7–12 (GPALPP) is the GPALPP motif 1 element. Residue S28 is modified to Phosphoserine. The GPALPP motif 2 signature appears at 32–37 (GPALPP). A compositionally biased stretch (acidic residues) spans 60–69 (GNQESEEEDT). A GPALPP motif 3 motif is present at residues 91–96 (GPALPP). S104 carries the post-translational modification Phosphoserine. The segment covering 106 to 115 (PRPIIGPALP) has biased composition (pro residues). Positions 111-116 (GPALPP) match the GPALPP motif 4 motif. Residues 123–132 (QKNDKGREDP) show a composition bias toward basic and acidic residues. Phosphoserine occurs at positions 136, 141, and 146. The span at 142–152 (EEAESGEDEDI) shows a compositional bias: acidic residues. Basic and acidic residues-rich tracts occupy residues 169-193 (EFEK…KPIT) and 233-267 (PADR…KRLA). Residue K277 forms a Glycyl lysine isopeptide (Lys-Gly) (interchain with G-Cter in SUMO2) linkage. The segment covering 293-308 (KAAEDKNKHQERIPFD) has biased composition (basic and acidic residues). K314 is covalently cross-linked (Glycyl lysine isopeptide (Lys-Gly) (interchain with G-Cter in SUMO2)).

This chain is GPALPP motifs-containing protein 1 (Gpalpp1), found in Mus musculus (Mouse).